The chain runs to 90 residues: MKTAIFTVVLALAVFAVLSFGWEANEEALSEEFTELIHEKEAASETEARECRYFWGECHDHMPCCDWLVCRYKWPITYNICVWNRTFPEK.

The first 19 residues, Met-1–Ser-19, serve as a signal peptide directing secretion. A propeptide spanning residues Phe-20–Glu-50 is cleaved from the precursor. 3 disulfides stabilise this stretch: Cys-51–Cys-65, Cys-58–Cys-70, and Cys-64–Cys-81.

Belongs to the neurotoxin 10 (Hwtx-1) family. 13 (Hntx-13) subfamily. As to expression, expressed by the venom gland.

It localises to the secreted. Functionally, ion channel inhibitor. The protein is U7-theraphotoxin-Hhn1a 4 of Cyriopagopus hainanus (Chinese bird spider).